Consider the following 1122-residue polypeptide: Adhesin P1 (1122 aa).

The first 30 residues, 1 to 30 (MKKLIFKLSVGITPLALIGLGSFGLAVSGA), serve as a signal peptide directing secretion. Disordered stretches follow at residues 183–209 (AGDT…GGAV), 244–273 (DYNS…GGRT), and 544–563 (QNSG…NGNE). Over residues 195–208 (AGGGSGSSAAGGGA) the composition is skewed to gly residues. The span at 259–273 (LDSSESSESINGGRT) shows a compositional bias: polar residues. The chain crosses the membrane as a helical span at residues 997–1021 (VLPVAISIPIIIIALALALGLGIGI). The segment at 1066–1122 (KTPQMLQANKKDGASSPSKPSAPAAKKPTGPTKPSAPGAKPTAPAKPKAPAPTKKIE) is disordered. Over residues 1079–1122 (ASSPSKPSAPAAKKPTGPTKPSAPGAKPTAPAKPKAPAPTKKIE) the composition is skewed to low complexity.

Belongs to the adhesin P1 family.

The protein resides in the cell membrane. Could be involved in cytadherence. This Mycoplasmoides gallisepticum (Mycoplasma gallisepticum) protein is Adhesin P1 (gapA).